Consider the following 347-residue polypeptide: GMP reductase (347 aa).

Residue 108-131 participates in NADP(+) binding; the sequence is ADFEKTKQILDLNPALNFVCIDVA. The K(+) site is built by G181 and G183. The active-site Thioimidate intermediate is C186. 216-239 serves as a coordination point for NADP(+); the sequence is IVSDGGCTTPGDVAKAFGGGADFV.

It belongs to the IMPDH/GMPR family. GuaC type 1 subfamily. Homotetramer.

The catalysed reaction is IMP + NH4(+) + NADP(+) = GMP + NADPH + 2 H(+). In terms of biological role, catalyzes the irreversible NADPH-dependent deamination of GMP to IMP. It functions in the conversion of nucleobase, nucleoside and nucleotide derivatives of G to A nucleotides, and in maintaining the intracellular balance of A and G nucleotides. This Shigella flexneri serotype 5b (strain 8401) protein is GMP reductase.